The sequence spans 226 residues: Leucyl/phenylalanyl-tRNA--protein transferase (226 aa).

Belongs to the L/F-transferase family.

The protein resides in the cytoplasm. It carries out the reaction N-terminal L-lysyl-[protein] + L-leucyl-tRNA(Leu) = N-terminal L-leucyl-L-lysyl-[protein] + tRNA(Leu) + H(+). The enzyme catalyses N-terminal L-arginyl-[protein] + L-leucyl-tRNA(Leu) = N-terminal L-leucyl-L-arginyl-[protein] + tRNA(Leu) + H(+). The catalysed reaction is L-phenylalanyl-tRNA(Phe) + an N-terminal L-alpha-aminoacyl-[protein] = an N-terminal L-phenylalanyl-L-alpha-aminoacyl-[protein] + tRNA(Phe). Its function is as follows. Functions in the N-end rule pathway of protein degradation where it conjugates Leu, Phe and, less efficiently, Met from aminoacyl-tRNAs to the N-termini of proteins containing an N-terminal arginine or lysine. The chain is Leucyl/phenylalanyl-tRNA--protein transferase from Pseudomonas paraeruginosa (strain DSM 24068 / PA7) (Pseudomonas aeruginosa (strain PA7)).